Here is a 299-residue protein sequence, read N- to C-terminus: Small ribosomal subunit protein uS2 (299 aa).

Residues 210–299 (AEKEEQTQVV…GAATDNSWAS (90 aa)) form a disordered region. A compositionally biased stretch (polar residues) spans 275 to 285 (WASTGTATVGP).

The protein belongs to the universal ribosomal protein uS2 family. In terms of assembly, component of the small ribosomal subunit. Mature ribosomes consist of a small (40S) and a large (60S) subunit. The 40S subunit contains about 33 different proteins and 1 molecule of RNA (18S). The 60S subunit contains about 49 different proteins and 3 molecules of RNA (28S, 5.8S and 5S). Interacts with ribosomal protein S21.

The protein localises to the cytoplasm. Its function is as follows. Required for the assembly and/or stability of the 40S ribosomal subunit. Required for the processing of the 20S rRNA-precursor to mature 18S rRNA in a late step of the maturation of 40S ribosomal subunits. This Ornithodoros parkeri (Soft tick) protein is Small ribosomal subunit protein uS2.